The sequence spans 210 residues: dTTP/UTP pyrophosphatase (210 aa).

The active-site Proton acceptor is D89.

It belongs to the Maf family. YhdE subfamily. A divalent metal cation serves as cofactor.

It localises to the cytoplasm. The enzyme catalyses dTTP + H2O = dTMP + diphosphate + H(+). It carries out the reaction UTP + H2O = UMP + diphosphate + H(+). Functionally, nucleoside triphosphate pyrophosphatase that hydrolyzes dTTP and UTP. May have a dual role in cell division arrest and in preventing the incorporation of modified nucleotides into cellular nucleic acids. The chain is dTTP/UTP pyrophosphatase from Burkholderia thailandensis (strain ATCC 700388 / DSM 13276 / CCUG 48851 / CIP 106301 / E264).